Consider the following 188-residue polypeptide: Cytochrome b-245 chaperone 1 homolog (188 aa).

The helical transmembrane segment at 20-42 (SIRSWSLLVGISSVGLAAAYYST) threads the bilayer.

It belongs to the CYBC1 family.

Its subcellular location is the endoplasmic reticulum membrane. Functions as a chaperone necessary for a stable expression of the CYBA and CYBB subunits of the cytochrome b-245 heterodimer. This is Cytochrome b-245 chaperone 1 homolog (cybc1) from Xenopus tropicalis (Western clawed frog).